Reading from the N-terminus, the 414-residue chain is Sec-independent protein translocase protein TatC (414 aa).

The tract at residues 1–21 is disordered; sequence MTQSTSVSKGGRVSRKAKKNP. 6 consecutive transmembrane segments (helical) span residues 45-65, 119-139, 157-177, 200-220, 238-258, and 259-279; these read IAVTTIIGFIWYEHGIPAWAI, GGLAGLVMACPIWLIEIWRFI, IAGFLFVLGVVAAYLVLPMGL, FVIALILVFGLSFEVPLFTAM, IMIVVIFIFAAIATPGQDPIS, and MLVLALTLVVLMELALQFTRI. The disordered stretch occupies residues 315 to 414; the sequence is IYDGDHKGIA…IQSSSFDDVL (100 aa). The span at 323–336 shows a compositional bias: gly residues; the sequence is IAGGGDAHPAGGSG. A compositionally biased stretch (low complexity) spans 345-357; sequence TAPTRAPSASESP. Residues 403–414 are compositionally biased toward polar residues; sequence DTIQSSSFDDVL.

It belongs to the TatC family. In terms of assembly, the Tat system comprises two distinct complexes: a TatABC complex, containing multiple copies of TatA, TatB and TatC subunits, and a separate TatA complex, containing only TatA subunits. Substrates initially bind to the TatABC complex, which probably triggers association of the separate TatA complex to form the active translocon.

It localises to the cell membrane. Its function is as follows. Part of the twin-arginine translocation (Tat) system that transports large folded proteins containing a characteristic twin-arginine motif in their signal peptide across membranes. Together with TatB, TatC is part of a receptor directly interacting with Tat signal peptides. This Corynebacterium kroppenstedtii (strain DSM 44385 / JCM 11950 / CIP 105744 / CCUG 35717) protein is Sec-independent protein translocase protein TatC.